The sequence spans 250 residues: ATP synthase subunit a (250 aa).

The next 6 membrane-spanning stretches (helical) occupy residues 26–46, 84–104, 114–134, 143–163, 193–213, and 216–236; these read FTNA…FLYF, FFPL…LGMF, IIVT…YGFY, VFVP…IEII, FVAS…LPLI, and VALT…FAVL.

The protein belongs to the ATPase A chain family. In terms of assembly, F-type ATPases have 2 components, CF(1) - the catalytic core - and CF(0) - the membrane proton channel. CF(1) has five subunits: alpha(3), beta(3), gamma(1), delta(1), epsilon(1). CF(0) has three main subunits: a(1), b(2) and c(9-12). The alpha and beta chains form an alternating ring which encloses part of the gamma chain. CF(1) is attached to CF(0) by a central stalk formed by the gamma and epsilon chains, while a peripheral stalk is formed by the delta and b chains.

Its subcellular location is the cell inner membrane. Functionally, key component of the proton channel; it plays a direct role in the translocation of protons across the membrane. This Rhizobium etli (strain ATCC 51251 / DSM 11541 / JCM 21823 / NBRC 15573 / CFN 42) protein is ATP synthase subunit a.